The primary structure comprises 111 residues: UPF0060 membrane protein Ajs_1473 (111 aa).

The next 4 membrane-spanning stretches (helical) occupy residues 8–28 (ILFA…WLVV), 33–53 (SAWL…LLTL), 65–85 (YGGM…GVAL), and 88–108 (WDFV…LQPA).

The protein belongs to the UPF0060 family.

It is found in the cell inner membrane. The chain is UPF0060 membrane protein Ajs_1473 from Acidovorax sp. (strain JS42).